A 159-amino-acid chain; its full sequence is SsrA-binding protein (159 aa).

Belongs to the SmpB family.

It is found in the cytoplasm. In terms of biological role, required for rescue of stalled ribosomes mediated by trans-translation. Binds to transfer-messenger RNA (tmRNA), required for stable association of tmRNA with ribosomes. tmRNA and SmpB together mimic tRNA shape, replacing the anticodon stem-loop with SmpB. tmRNA is encoded by the ssrA gene; the 2 termini fold to resemble tRNA(Ala) and it encodes a 'tag peptide', a short internal open reading frame. During trans-translation Ala-aminoacylated tmRNA acts like a tRNA, entering the A-site of stalled ribosomes, displacing the stalled mRNA. The ribosome then switches to translate the ORF on the tmRNA; the nascent peptide is terminated with the 'tag peptide' encoded by the tmRNA and targeted for degradation. The ribosome is freed to recommence translation, which seems to be the essential function of trans-translation. The protein is SsrA-binding protein of Acidiphilium cryptum (strain JF-5).